Here is a 420-residue protein sequence, read N- to C-terminus: UDP-N-acetylmuramoylalanine--D-glutamate ligase (420 aa).

109-115 (GSAGKTT) contributes to the ATP binding site.

It belongs to the MurCDEF family.

It is found in the cytoplasm. The catalysed reaction is UDP-N-acetyl-alpha-D-muramoyl-L-alanine + D-glutamate + ATP = UDP-N-acetyl-alpha-D-muramoyl-L-alanyl-D-glutamate + ADP + phosphate + H(+). The protein operates within cell wall biogenesis; peptidoglycan biosynthesis. In terms of biological role, cell wall formation. Catalyzes the addition of glutamate to the nucleotide precursor UDP-N-acetylmuramoyl-L-alanine (UMA). The protein is UDP-N-acetylmuramoylalanine--D-glutamate ligase of Chlamydia abortus (strain DSM 27085 / S26/3) (Chlamydophila abortus).